A 297-amino-acid polypeptide reads, in one-letter code: Vacuolar protein sorting-associated protein 26C (297 aa).

This sequence belongs to the VPS26 family. As to quaternary structure, component of the commander complex that is essential for endosomal recycling of transmembrane cargos; the commander complex is composed of the CCC subcomplex and the retriever subcomplex. Component of the heterotrimeric retriever complex consisting of VPS26C, VPS29 and VPS35L; within the complex interacts with VPS35L. Interacts with SNX17 (via C-terminus); the interaction is direct and associates SNX17 with the retriever complex. Interacts with SNX31; the interaction is direct. Ubiquitously expressed.

It localises to the endosome. Component of the commander complex that is essential for endosomal recycling of transmembrane cargos; the commander complex is composed of the CCC subcomplex and the retriever subcomplex. Component of the retriever complex, which is a heterotrimeric complex related to retromer cargo-selective complex (CSC) and essential for retromer-independent retrieval and recycling of numerous cargos such as integrin alpha-5/beta-1 (ITGA5:ITGB1). The recruitment of the retriever complex to the endosomal membrane involves CCC and WASH complexes. In the endosomes, drives the retriever and recycling of NxxY-motif-containing cargo proteins by coupling to SNX17, a cargo essential for the homeostatic maintenance of numerous cell surface proteins associated with processes that include cell migration, cell adhesion, nutrient supply and cell signaling. Functionally, (Microbial infection) The heterotrimeric retriever complex, in collaboration with the CCC complex, mediates the exit of human papillomavirus to the cell surface. This chain is Vacuolar protein sorting-associated protein 26C, found in Homo sapiens (Human).